The primary structure comprises 504 residues: Sodium-coupled neutral amino acid symporter 2 (504 aa).

The segment at 1–23 is disordered; the sequence is MKKTEMGRFNISPDEDSSSYSSN. Residues 1 to 76 are Cytoplasmic-facing; the sequence is MKKTEMGRFN…HPGTTSFGMS (76 aa). The interval 1-96 is regulates protein turnover upon amino acid deprivation; that stretch reads MKKTEMGRFN…SGILGLSYAM (96 aa). A phosphoserine mark is found at Ser-12, Ser-21, Ser-22, and Ser-55. A helical transmembrane segment spans residues 77-96; sequence VFNLSNAIVGSGILGLSYAM. Na(+) is bound at residue Asn-82. Over 97 to 102 the chain is Extracellular; it reads ANTGIA. The chain crosses the membrane as a helical span at residues 103-123; it reads LFIILLTFVSIFSLYSVHLLL. Topologically, residues 124 to 158 are cytoplasmic; it reads KTANEGGSLLYEQLGHKAYGLAGKLAASGSITMQN. The chain crosses the membrane as a helical span at residues 159-177; sequence IGAMSSYLFIVKYELPLVI. Residues 178–188 lie on the Extracellular side of the membrane; sequence KALMNIEDTNG. The chain crosses the membrane as a helical span at residues 189-209; the sequence is LWYLNGDYLVLLVSLVLILPL. Residues 210 to 217 are Cytoplasmic-facing; sequence SLLRNLGY. A helical membrane pass occupies residues 218 to 238; that stretch reads LGYTSGLSLLCMIFFLIVVIC. At 239-289 the chain is on the extracellular side; that stretch reads KKFQIPCPVEAALVANETVNGTFTQAALALAFNSTADDACRPRYFIFNSQT. Cysteines 245 and 278 form a disulfide. 2 N-linked (GlcNAc...) asparagine glycosylation sites follow: Asn-254 and Asn-258. A helical transmembrane segment spans residues 290–310; the sequence is VYAVPILTFSFVCHPAVLPIY. The Cytoplasmic portion of the chain corresponds to 311–326; it reads EELKSRSRRRMMNVSK. The chain crosses the membrane as a helical span at residues 327–347; that stretch reads ISFFAMFLMYLLAALFGYLTF. At 348–368 the chain is on the extracellular side; it reads YGHVESELLHTYSEIVGTDIL. A helical membrane pass occupies residues 369 to 389; it reads LLVVRLAVLVAVTLTVPVVIF. Thr-383 is a Na(+) binding site. The Cytoplasmic portion of the chain corresponds to 390–410; the sequence is PIRSSVTHLLCPTKEFSWLRH. A helical transmembrane segment spans residues 411–431; that stretch reads SIITVTILSFTNLLVIFVPTI. The Extracellular portion of the chain corresponds to 432-433; the sequence is RD. Residues 434–454 form a helical membrane-spanning segment; it reads IFGFIGASAAAMLIFILPSAF. At 455 to 469 the chain is on the cytoplasmic side; that stretch reads YIKLVKKEPMRSVQK. Residues 470–492 form a helical membrane-spanning segment; it reads IGALCFLLSGIVVMIGSMGLIVL. Residues 493-504 are Extracellular-facing; sequence DWVHDASAAGGH.

Belongs to the amino acid/polyamine transporter 2 family. In terms of processing, polyubiquitination by NEDD4L regulates the degradation and the activity of SLC38A2. In terms of tissue distribution, expressed in cerebral and cerebellar astrocytes and neurons.

It localises to the cell membrane. It catalyses the reaction L-alanine(in) + Na(+)(in) = L-alanine(out) + Na(+)(out). The catalysed reaction is glycine(in) + Na(+)(in) = glycine(out) + Na(+)(out). It carries out the reaction L-serine(in) + Na(+)(in) = L-serine(out) + Na(+)(out). The enzyme catalyses L-proline(in) + Na(+)(in) = L-proline(out) + Na(+)(out). It catalyses the reaction L-methionine(in) + Na(+)(in) = L-methionine(out) + Na(+)(out). The catalysed reaction is L-histidine(in) + Na(+)(in) = L-histidine(out) + Na(+)(out). It carries out the reaction L-asparagine(in) + Na(+)(in) = L-asparagine(out) + Na(+)(out). The enzyme catalyses L-glutamine(in) + Na(+)(in) = L-glutamine(out) + Na(+)(out). It catalyses the reaction L-threonine(in) + Na(+)(in) = L-threonine(out) + Na(+)(out). The catalysed reaction is L-leucine(in) + Na(+)(in) = L-leucine(out) + Na(+)(out). It carries out the reaction L-phenylalanine(in) + Na(+)(in) = L-phenylalanine(out) + Na(+)(out). Its activity is regulated as follows. Inhibited by N-methyl-D-glucamine. Inhibited by choline. Allosteric regulation of sodium ions binding by pH. Functionally, symporter that cotransports neutral amino acids and sodium ions from the extracellular to the intracellular side of the cell membrane. The transport is pH-sensitive, Li(+)-intolerant, electrogenic, driven by the Na(+) electrochemical gradient and cotransports of neutral amino acids and sodium ions with a stoichiometry of 1:1. May function in the transport of amino acids at the blood-brain barrier. May function in the transport of amino acids in the supply of maternal nutrients to the fetus through the placenta. Maintains a key metabolic glutamine/glutamate balance underpinning retrograde signaling by dendritic release of the neurotransmitter glutamate. Transports L-proline in differentiating osteoblasts for the efficient synthesis of proline-enriched proteins and provides proline essential for osteoblast differentiation and bone formation during bone development. The polypeptide is Sodium-coupled neutral amino acid symporter 2 (Mus musculus (Mouse)).